We begin with the raw amino-acid sequence, 543 residues long: Cysteine/serine-rich nuclear protein 2 (543 aa).

The residue at position 1 (methionine 1) is an N-acetylmethionine. 3 disordered regions span residues 1 to 51, 281 to 305, and 488 to 543; these read MDAF…SFTP, KRQVSRPAAPDEEPSPTASCSLTGA, and DCNP…PLAV. Residues 31 to 40 are compositionally biased toward low complexity; it reads SSDSADSCDS. Polar residues-rich tracts occupy residues 42–51 and 296–305; these read NPPTTASFTP and PTASCSLTGA.

It belongs to the AXUD1 family.

It is found in the nucleus. In terms of biological role, binds to the consensus sequence 5'-AGAGTG-3' and has transcriptional activator activity. May play a role in apoptosis. The sequence is that of Cysteine/serine-rich nuclear protein 2 (CSRNP2) from Homo sapiens (Human).